Consider the following 350-residue polypeptide: Phosphoribosylformylglycinamidine cyclo-ligase (350 aa).

The protein belongs to the AIR synthase family.

Its subcellular location is the cytoplasm. The enzyme catalyses 2-formamido-N(1)-(5-O-phospho-beta-D-ribosyl)acetamidine + ATP = 5-amino-1-(5-phospho-beta-D-ribosyl)imidazole + ADP + phosphate + H(+). The protein operates within purine metabolism; IMP biosynthesis via de novo pathway; 5-amino-1-(5-phospho-D-ribosyl)imidazole from N(2)-formyl-N(1)-(5-phospho-D-ribosyl)glycinamide: step 2/2. The protein is Phosphoribosylformylglycinamidine cyclo-ligase of Cupriavidus metallidurans (strain ATCC 43123 / DSM 2839 / NBRC 102507 / CH34) (Ralstonia metallidurans).